The following is a 310-amino-acid chain: MSSNNRKKLLLMGRSGSGKSSMRSIIFSNYSAFDTRRLGATIDVEHSHLRFLGNMTLNLWDCGGQDVFMENYFTKQKDHIFQMVQVLIHVFDVESTEVLKDIEIFAKALKQLRKYSPDAKIFVLLHKMDLVQLDKREELFQIMMKNLSETSSEFGFPNLIGFPTSIWDESLYKAWSQIVCSLIPNMSNHQSNLKKFKEIMNALEIILFERTTFLVICSSNGENSNENHDSSDNNNVLLDPKRFEKISNIMKNFKQSCTKLKSGFKTLILNNNIYVSELSSNMVCFIVLKDMNIPQELVLENIKKAKEFFQ.

GTP-binding residues include Ser15, Gly18, Lys19, Ser20, Ser21, Thr35, Thr41, Gly64, His126, Asp129, and Ile166.

It belongs to the GTR/RAG GTP-binding protein family. As to quaternary structure, heterodimer; with GTR2. Component of the GSE complex composed of GTR1, GTR2, SLM4, MEH1 and LTV1. Interacts with GTR2; the interaction is direct. Interacts with TOR1.

The protein localises to the vacuole membrane. It catalyses the reaction GTP + H2O = GDP + phosphate + H(+). GTPase involved in activation of the TORC1 signaling pathway, which promotes growth and represses autophagy in nutrient-rich conditions. Also required for TORC1 inactivation during nitrogen starvation. Required for intracellular sorting of GAP1 out of the endosome. Functionally associated with the inorganic phosphate transporter PHO84, and may be involved in regulating its function or localization. This Saccharomyces cerevisiae (strain ATCC 204508 / S288c) (Baker's yeast) protein is GTP-binding protein GTR1 (GTR1).